The chain runs to 283 residues: 4-hydroxy-tetrahydrodipicolinate synthase (283 aa).

Thr-46 is a pyruvate binding site. Residue Tyr-134 is the Proton donor/acceptor of the active site. The active-site Schiff-base intermediate with substrate is Lys-162. Residue Ile-208 participates in pyruvate binding.

Belongs to the DapA family. As to quaternary structure, homotetramer; dimer of dimers.

It is found in the cytoplasm. It catalyses the reaction L-aspartate 4-semialdehyde + pyruvate = (2S,4S)-4-hydroxy-2,3,4,5-tetrahydrodipicolinate + H2O + H(+). It functions in the pathway amino-acid biosynthesis; L-lysine biosynthesis via DAP pathway; (S)-tetrahydrodipicolinate from L-aspartate: step 3/4. In terms of biological role, catalyzes the condensation of (S)-aspartate-beta-semialdehyde [(S)-ASA] and pyruvate to 4-hydroxy-tetrahydrodipicolinate (HTPA). The chain is 4-hydroxy-tetrahydrodipicolinate synthase from Methanothermobacter thermautotrophicus (strain ATCC 29096 / DSM 1053 / JCM 10044 / NBRC 100330 / Delta H) (Methanobacterium thermoautotrophicum).